A 247-amino-acid polypeptide reads, in one-letter code: Protein McbF (247 aa).

The ABC transporter domain maps to 6-234 (LEINSLSFSY…NNETTQKRHL (229 aa)). ATP is bound at residue 40–47 (GENPAGKT).

The protein belongs to the ABC transporter superfamily.

Functionally, together with two further proteins McbE and McbG this protein causes immunity to the peptide antibiotic microcin B17, which inhibits DNA replication in enterobacteriaceae. Immunity is determined by two different mechanisms. McbE is involved in the production of extracellular MccB17 and, in a complex with mcbf it also serves as 'pump' for the export of active MccB17 from the cytoplasm to the periplasmic space. In Escherichia coli, this protein is Protein McbF (mcbF).